A 123-amino-acid polypeptide reads, in one-letter code: MPTVNQLIRKPRQAQVKRNKVPALQENPQKRGVCTRVYTTTPRKPNSALRKVAKIRLTNGFEVIGYIPGEGHNLQEHSVVMIRGGRVKDLPGVRYHIIRGVLDTQGVKNRKQRRSKYGAKRPK.

D89 bears the 3-methylthioaspartic acid mark.

The protein belongs to the universal ribosomal protein uS12 family. As to quaternary structure, part of the 30S ribosomal subunit. Contacts proteins S8 and S17. May interact with IF1 in the 30S initiation complex.

In terms of biological role, with S4 and S5 plays an important role in translational accuracy. Its function is as follows. Interacts with and stabilizes bases of the 16S rRNA that are involved in tRNA selection in the A site and with the mRNA backbone. Located at the interface of the 30S and 50S subunits, it traverses the body of the 30S subunit contacting proteins on the other side and probably holding the rRNA structure together. The combined cluster of proteins S8, S12 and S17 appears to hold together the shoulder and platform of the 30S subunit. The protein is Small ribosomal subunit protein uS12 of Rhizobium meliloti (strain 1021) (Ensifer meliloti).